The following is an 872-amino-acid chain: G-type lectin S-receptor-like serine/threonine-protein kinase At5g24080 (872 aa).

A signal peptide spans 1 to 25 (MSSFHFYFPSVGLFSFFCFFLVSLA). Residues 26-472 (TEPHIGLGSK…SRKSHGLRQK (447 aa)) are Extracellular-facing. Residues 30-149 (IGLGSKLKAS…EVTAGPTIWQ (120 aa)) form the Bulb-type lectin domain. Residues asparagine 49, asparagine 117, asparagine 208, asparagine 219, asparagine 261, and asparagine 294 are each glycosylated (N-linked (GlcNAc...) asparagine). The EGF-like; atypical domain occupies 306–344 (VSNPCDIAGICGNGVCNLDRTKKNADCLCLPGSVKLPDQ). Intrachain disulfides connect cysteine 310/cysteine 321 and cysteine 316/cysteine 332. 3 N-linked (GlcNAc...) asparagine glycosylation sites follow: asparagine 353, asparagine 367, and asparagine 390. Positions 360–447 (CESNINRNGS…PGSTLFVKTR (88 aa)) constitute a PAN domain. 2 disulfides stabilise this stretch: cysteine 400–cysteine 424 and cysteine 404–cysteine 410. Asparagine 449 and asparagine 459 each carry an N-linked (GlcNAc...) asparagine glycan. Residues 473–493 (VLVIPIVVGMLVLVALLGMLL) traverse the membrane as a helical segment. Topologically, residues 494–872 (YYNLDRKRTL…TCSYSSMSPR (379 aa)) are cytoplasmic. Residue threonine 521 is modified to Phosphothreonine. A Protein kinase domain is found at 530 to 810 (NNFSQLLGSG…LEGTSDEINL (281 aa)). Residues 536–544 (LGSGGFGTV) and lysine 558 each bind ATP. Tyrosine 603 is subject to Phosphotyrosine. Residues 619–637 (EQTANLLDWRTRFEIAVAT) form a caM-binding region. Aspartate 656 (proton acceptor) is an active-site residue. Threonine 690 and threonine 695 each carry phosphothreonine.

It belongs to the protein kinase superfamily. Ser/Thr protein kinase family.

The protein resides in the cell membrane. It catalyses the reaction L-seryl-[protein] + ATP = O-phospho-L-seryl-[protein] + ADP + H(+). It carries out the reaction L-threonyl-[protein] + ATP = O-phospho-L-threonyl-[protein] + ADP + H(+). The sequence is that of G-type lectin S-receptor-like serine/threonine-protein kinase At5g24080 from Arabidopsis thaliana (Mouse-ear cress).